The sequence spans 278 residues: 4-deoxy-L-threo-5-hexosulose-uronate ketol-isomerase (278 aa).

The Zn(2+) site is built by H196, H198, E203, and H245.

Belongs to the KduI family. It depends on Zn(2+) as a cofactor.

It carries out the reaction 5-dehydro-4-deoxy-D-glucuronate = 3-deoxy-D-glycero-2,5-hexodiulosonate. It participates in glycan metabolism; pectin degradation; 2-dehydro-3-deoxy-D-gluconate from pectin: step 4/5. Its function is as follows. Catalyzes the isomerization of 5-dehydro-4-deoxy-D-glucuronate to 3-deoxy-D-glycero-2,5-hexodiulosonate. In Salmonella heidelberg (strain SL476), this protein is 4-deoxy-L-threo-5-hexosulose-uronate ketol-isomerase.